A 195-amino-acid polypeptide reads, in one-letter code: Large ribosomal subunit protein uL18 (195 aa).

This sequence belongs to the universal ribosomal protein uL18 family. Part of the 50S ribosomal subunit. Contacts the 5S and 23S rRNAs.

This is one of the proteins that bind and probably mediate the attachment of the 5S RNA into the large ribosomal subunit, where it forms part of the central protuberance. This is Large ribosomal subunit protein uL18 from Methanocaldococcus jannaschii (strain ATCC 43067 / DSM 2661 / JAL-1 / JCM 10045 / NBRC 100440) (Methanococcus jannaschii).